The following is a 143-amino-acid chain: Small ribosomal subunit protein uS12 (143 aa).

Residues 1–20 show a composition bias toward basic residues; it reads MGKCRGLRTARKLRSHRRDH. The interval 1–26 is disordered; the sequence is MGKCRGLRTARKLRSHRRDHKWHDKQ. Residue K37 forms a Glycyl lysine isopeptide (Lys-Gly) (interchain with G-Cter in SUMO2) linkage. Residue K54 is modified to N6-succinyllysine. Position 62 is a 3-hydroxyproline (P62). N6-acetyllysine is present on K135.

Belongs to the universal ribosomal protein uS12 family. As to quaternary structure, component of the 40S small ribosomal subunit. Part of the small subunit (SSU) processome, composed of more than 70 proteins and the RNA chaperone small nucleolar RNA (snoRNA) U3. (Microbial infection) Interacts with the African swine fever virus (ASFV) ubiquitin-conjugating enzyme UBCv1; this interaction probably plays a role in the viral regulation of host protein synthesis. In terms of processing, hydroxylation at Pro-62 affects translation termination efficiency.

Its subcellular location is the cytoplasm. The protein resides in the cytosol. The protein localises to the rough endoplasmic reticulum. It localises to the nucleus. It is found in the nucleolus. Functionally, component of the ribosome, a large ribonucleoprotein complex responsible for the synthesis of proteins in the cell. The small ribosomal subunit (SSU) binds messenger RNAs (mRNAs) and translates the encoded message by selecting cognate aminoacyl-transfer RNA (tRNA) molecules. The large subunit (LSU) contains the ribosomal catalytic site termed the peptidyl transferase center (PTC), which catalyzes the formation of peptide bonds, thereby polymerizing the amino acids delivered by tRNAs into a polypeptide chain. The nascent polypeptides leave the ribosome through a tunnel in the LSU and interact with protein factors that function in enzymatic processing, targeting, and the membrane insertion of nascent chains at the exit of the ribosomal tunnel. Plays an important role in translational accuracy. Part of the small subunit (SSU) processome, first precursor of the small eukaryotic ribosomal subunit. During the assembly of the SSU processome in the nucleolus, many ribosome biogenesis factors, an RNA chaperone and ribosomal proteins associate with the nascent pre-rRNA and work in concert to generate RNA folding, modifications, rearrangements and cleavage as well as targeted degradation of pre-ribosomal RNA by the RNA exosome. This chain is Small ribosomal subunit protein uS12 (RPS23), found in Sus scrofa (Pig).